The chain runs to 230 residues: UPF0173 metal-dependent hydrolase RSKD131_0588 (230 aa).

The protein belongs to the UPF0173 family.

The protein is UPF0173 metal-dependent hydrolase RSKD131_0588 of Cereibacter sphaeroides (strain KD131 / KCTC 12085) (Rhodobacter sphaeroides).